The primary structure comprises 173 residues: Ribulose bisphosphate carboxylase small subunit, chloroplastic 2 (173 aa).

Residues 1-33 (VVLSKECAKPLATPKVTLNKRGFATTIATKNRE) constitute a chloroplast transit peptide.

It belongs to the RuBisCO small chain family. As to quaternary structure, heterohexadecamer of 8 large and 8 small subunits.

The protein localises to the plastid. It is found in the chloroplast. In terms of biological role, ruBisCO catalyzes two reactions: the carboxylation of D-ribulose 1,5-bisphosphate, the primary event in carbon dioxide fixation, as well as the oxidative fragmentation of the pentose substrate. Both reactions occur simultaneously and in competition at the same active site. Although the small subunit is not catalytic it is essential for maximal activity. The polypeptide is Ribulose bisphosphate carboxylase small subunit, chloroplastic 2 (Acetabularia acetabulum (Mermaid's wine glass)).